The sequence spans 435 residues: Trigger factor (435 aa).

The 86-residue stretch at 163 to 248 folds into the PPIase FKBP-type domain; it reads GDFVTFDFKG…IKEIKVKELP (86 aa).

Belongs to the FKBP-type PPIase family. Tig subfamily.

The protein localises to the cytoplasm. The enzyme catalyses [protein]-peptidylproline (omega=180) = [protein]-peptidylproline (omega=0). Involved in protein export. Acts as a chaperone by maintaining the newly synthesized protein in an open conformation. Functions as a peptidyl-prolyl cis-trans isomerase. The sequence is that of Trigger factor from Citrifermentans bemidjiense (strain ATCC BAA-1014 / DSM 16622 / JCM 12645 / Bem) (Geobacter bemidjiensis).